Here is a 555-residue protein sequence, read N- to C-terminus: Methionine--tRNA ligase (555 aa).

Residues 13-23 (PYANGSLHIGH) carry the 'HIGH' region motif. Residues C144, C147, C157, and C160 each coordinate Zn(2+). Positions 330-334 (KISKS) match the 'KMSKS' region motif. K333 provides a ligand contact to ATP.

This sequence belongs to the class-I aminoacyl-tRNA synthetase family. MetG type 1 subfamily. In terms of assembly, monomer. Zn(2+) is required as a cofactor.

It is found in the cytoplasm. It carries out the reaction tRNA(Met) + L-methionine + ATP = L-methionyl-tRNA(Met) + AMP + diphosphate. In terms of biological role, is required not only for elongation of protein synthesis but also for the initiation of all mRNA translation through initiator tRNA(fMet) aminoacylation. The sequence is that of Methionine--tRNA ligase from Blochmanniella pennsylvanica (strain BPEN).